Here is a 538-residue protein sequence, read N- to C-terminus: Calcium-dependent protein kinase 8 (538 aa).

Residues 1 to 26 (MGNCCGTPATAEEGGKRRRRGKQKKA) form a disordered region. A lipid anchor (N-myristoyl glycine) is attached at G2. Over residues 16–25 (KRRRRGKQKK) the composition is skewed to basic residues. Positions 64–322 (YELGGELGRG…AEQVLEHPWL (259 aa)) constitute a Protein kinase domain. ATP contacts are provided by residues 70-78 (LGRGEFGIT) and K93. D188 functions as the Proton acceptor in the catalytic mechanism. The tract at residues 328 to 358 (MPDIPLGDAVRARLQQFAAMNKLKKKALKVI) is autoinhibitory domain. 4 EF-hand domains span residues 365-400 (EEAADIKDMFDKMDVSKNGQLTFEDFKAGIRKLGNQ), 401-436 (MPDSDLKILMDAADIDKNGILDYQEFVAVSIHVRKI), 437-472 (GNDEHIQKAFSYFDQNKSGYIEIEELREALVDEIDG), and 473-508 (NDEDIINSIIRDVDTDKDGKISYDEFAVMMKAGTDW). Ca(2+)-binding residues include D378, S380, N382, Q384, D389, D414, D416, N418, E425, D450, N452, S454, Y456, E461, D486, D488, D490, K492, and E497.

The protein belongs to the protein kinase superfamily. Ser/Thr protein kinase family. CDPK subfamily.

The protein resides in the membrane. It carries out the reaction L-seryl-[protein] + ATP = O-phospho-L-seryl-[protein] + ADP + H(+). It catalyses the reaction L-threonyl-[protein] + ATP = O-phospho-L-threonyl-[protein] + ADP + H(+). Its activity is regulated as follows. Activated by calcium. Autophosphorylation may play an important role in the regulation of the kinase activity. May play a role in signal transduction pathways that involve calcium as a second messenger. The sequence is that of Calcium-dependent protein kinase 8 from Oryza sativa subsp. japonica (Rice).